The following is a 73-amino-acid chain: Beta-1 adrenergic receptor (73 aa).

Residues 1–12 (ISALVSFLPILM) traverse the membrane as a helical segment. Residues 13–38 (HWWRAENDEARRCYNDPKCCDFVTNR) are Extracellular-facing. C25 and C31 are oxidised to a cystine. The chain crosses the membrane as a helical span at residues 39 to 64 (AYAIASSVVSFYVPLCIMAFVYLRVF). Position 44 (S44) interacts with cyanopindolol. Residues 65–73 (REAQKQVKK) are Cytoplasmic-facing.

Belongs to the G-protein coupled receptor 1 family. Adrenergic receptor subfamily. ADRB1 sub-subfamily. As to quaternary structure, interacts (via C-terminus PDZ motif) with RAPGEF2; the interaction is direct. Interacts with GOPC, MAGI3 and DLG4. Post-translationally, homologous desensitization of the receptor is mediated by its phosphorylation by beta-adrenergic receptor kinase.

It is found in the cell membrane. The protein resides in the early endosome. Functionally, beta-adrenergic receptors mediate the catecholamine-induced activation of adenylate cyclase through the action of G proteins. This receptor binds epinephrine and norepinephrine with approximately equal affinity. Mediates Ras activation through G(s)-alpha- and cAMP-mediated signaling. In dorsal pons neurons, involved in the regulation of sleep/wake behaviors. The protein is Beta-1 adrenergic receptor (ADRB1) of Meriones unguiculatus (Mongolian jird).